A 246-amino-acid chain; its full sequence is Transcription factor A, mitochondrial (246 aa).

The N-terminal 42 residues, 1 to 42, are a transit peptide targeting the mitochondrion; sequence MALLRGVWGVLSALGKSGADLCAVCGSRLRSPFSFAYVPRWF. Residues 50–118 constitute a DNA-binding region (HMG box 1); the sequence is PKKPMTSYVR…VYKEEVNRIQ (69 aa). Phosphoserine; by PKA occurs at positions 56 and 61. Threonine 122 is modified (phosphothreonine). Positions 155-219 form a DNA-binding region, HMG box 2; that stretch reads PKRPRSAYNI…RYYNEMKSWE (65 aa). Residue serine 160 is modified to Phosphoserine; by PKA. Phosphoserine is present on residues serine 193 and serine 195.

Monomer; binds DNA as a monomer. Homodimer. Component of the mitochondrial transcription initiation complex, composed at least of TFB2M, TFAM and POLRMT. In this complex TFAM recruits POLRMT to the promoter whereas TFB2M induces structural changes in POLRMT to enable promoter opening and trapping of the DNA non-template strand. Upon metabolic stress, forms a complex composed of FOXO3, SIRT3, TFAM and POLRMT. Interacts with TFB1M and TFB2M. Interacts with CLPX; this enhances DNA-binding. Phosphorylation by PKA within the HMG box 1 impairs DNA binding and promotes degradation by the AAA+ Lon protease.

The protein resides in the mitochondrion. It localises to the mitochondrion matrix. It is found in the mitochondrion nucleoid. In terms of biological role, binds to the mitochondrial light strand promoter and functions in mitochondrial transcription regulation. Component of the mitochondrial transcription initiation complex, composed at least of TFB2M, TFAM and POLRMT that is required for basal transcription of mitochondrial DNA. In this complex, TFAM recruits POLRMT to a specific promoter whereas TFB2M induces structural changes in POLRMT to enable promoter opening and trapping of the DNA non-template strand. Required for accurate and efficient promoter recognition by the mitochondrial RNA polymerase. Promotes transcription initiation from the HSP1 and the light strand promoter by binding immediately upstream of transcriptional start sites. Is able to unwind DNA. Bends the mitochondrial light strand promoter DNA into a U-turn shape via its HMG boxes. Required for maintenance of normal levels of mitochondrial DNA. May play a role in organizing and compacting mitochondrial DNA. This is Transcription factor A, mitochondrial from Sus scrofa (Pig).